The following is a 433-amino-acid chain: Succinate--CoA ligase [GDP-forming] subunit beta, mitochondrial (433 aa).

A mitochondrion-targeting transit peptide spans 1-38; it reads MASPVAIAAQAGKLLRERALRPLLAVRSQAGHLTPRRW. The 229-residue stretch at 47–275 folds into the ATP-grasp domain; it reads KKLMSEHGVR…NAEFRQKDIF (229 aa). Q58 contributes to the GTP binding site. N6-acetyllysine; alternate is present on K67. K67 is subject to N6-succinyllysine; alternate. K74 carries the post-translational modification N6-acetyllysine. K79 carries the N6-succinyllysine modification. GTP is bound at residue 91 to 93; it reads GRG. N6-acetyllysine occurs at positions 112, 133, and 140. L147 serves as a coordination point for GTP. A Phosphoserine modification is found at S162. K201 is modified (N6-acetyllysine). At S217 the chain carries Phosphoserine. Residues K219 and K228 each carry the N6-acetyllysine modification. Mg(2+) contacts are provided by N244 and D258. At K272 the chain carries N6-acetyllysine. Position 309 (N309) interacts with substrate. K339 carries the N6-succinyllysine modification. K348 carries the post-translational modification N6-acetyllysine. A substrate-binding site is contributed by 366-368; that stretch reads GIV. N6-acetyllysine is present on residues K387, K407, and K424.

This sequence belongs to the succinate/malate CoA ligase beta subunit family. GTP-specific subunit beta subfamily. In terms of assembly, heterodimer of an alpha and a beta subunit. The beta subunit determines specificity for GTP. The cofactor is Mg(2+).

It is found in the mitochondrion. It carries out the reaction GTP + succinate + CoA = succinyl-CoA + GDP + phosphate. It participates in carbohydrate metabolism; tricarboxylic acid cycle; succinate from succinyl-CoA (ligase route): step 1/1. GTP-specific succinyl-CoA synthetase functions in the citric acid cycle (TCA), coupling the hydrolysis of succinyl-CoA to the synthesis of GTP and thus represents the only step of substrate-level phosphorylation in the TCA. The beta subunit provides nucleotide specificity of the enzyme and binds the substrate succinate, while the binding sites for coenzyme A and phosphate are found in the alpha subunit. The polypeptide is Succinate--CoA ligase [GDP-forming] subunit beta, mitochondrial (Mus musculus (Mouse)).